We begin with the raw amino-acid sequence, 95 residues long: uncharacterized protein (95 aa).

The segment at 65-95 (DANDYDTTTTEEEDSSTTTTTDNETNSDDDI) is disordered.

This is an uncharacterized protein from Lymantria dispar multicapsid nuclear polyhedrosis virus (LdMNPV).